The following is a 240-amino-acid chain: Fatty acid metabolism regulator protein (240 aa).

In terms of domain architecture, HTH gntR-type spans 6–74 (KGPASFAEKY…HGKPTRVNNF (69 aa)). Positions 34-53 (ERELSELIGVTRTTLREVLQ) form a DNA-binding region, H-T-H motif.

In terms of assembly, homodimer.

The protein resides in the cytoplasm. In terms of biological role, multifunctional regulator of fatty acid metabolism. The chain is Fatty acid metabolism regulator protein from Shewanella oneidensis (strain ATCC 700550 / JCM 31522 / CIP 106686 / LMG 19005 / NCIMB 14063 / MR-1).